Consider the following 189-residue polypeptide: Parkinson disease protein 7 homolog (189 aa).

An N-acetylalanine; in Protein/nucleic acid deglycase DJ-1, N-terminally processed modification is found at Ala-2. 2 S-palmitoyl cysteine lipidation sites follow: Cys-46 and Cys-53. Tyr-67 carries the phosphotyrosine modification. Cys-106 (nucleophile) is an active-site residue. Cys-106 is subject to Cysteine sulfinic acid (-SO2H); alternate. Residue Cys-106 is the site of S-palmitoyl cysteine; alternate attachment. Residue His-126 is part of the active site. Residue Lys-130 forms a Glycyl lysine isopeptide (Lys-Gly) (interchain with G-Cter in SUMO) linkage. Position 148 is an N6-acetyllysine (Lys-148). An N6-succinyllysine modification is found at Lys-182.

This sequence belongs to the peptidase C56 family. As to quaternary structure, homodimer. Binds EFCAB6/DJBP and PIAS2. Part of a ternary complex containing PARK7, EFCAB6/DJBP and AR. Interacts (via N-terminus) with OTUD7B. Interacts with BBS1, HIPK1, CLCF1 and MTERF. Forms a complex with PINK1 and PRKN. Interacts (via C-terminus) with NCF1; the interaction is enhanced by LPS and modulates NCF1 phosphorylation and membrane translocation. Interacts with NENF. Deglycase activity does not require glutathione as a cofactor, however, glycated glutathione constitutes a PARK7 substrate. serves as cofactor. Post-translationally, sumoylated on Lys-130 by PIAS2 or PIAS4; which is essential for cell-growth promoting activity and transforming activity. Undergoes cleavage of a C-terminal peptide and subsequent activation of protease activity in response to oxidative stress. As to expression, detected in liver, heart, spleen and testis (at protein level). Detected in liver, heart, spleen, kidney, epididymidis, vas deferens, sperm cells and testis.

It localises to the cell membrane. It is found in the cytoplasm. The protein localises to the nucleus. The protein resides in the membrane raft. Its subcellular location is the mitochondrion. It localises to the endoplasmic reticulum. It catalyses the reaction N(omega)-(1-hydroxy-2-oxopropyl)-L-arginyl-[protein] + H2O = lactate + L-arginyl-[protein] + H(+). The enzyme catalyses N(6)-(1-hydroxy-2-oxopropyl)-L-lysyl-[protein] + H2O = lactate + L-lysyl-[protein] + H(+). The catalysed reaction is S-(1-hydroxy-2-oxopropyl)-L-cysteinyl-[protein] + H2O = lactate + L-cysteinyl-[protein] + H(+). It carries out the reaction N(omega)-(1-hydroxy-2-oxoethyl)-L-arginyl-[protein] + H2O = L-arginyl-[protein] + glycolate + H(+). It catalyses the reaction N(6)-(1-hydroxy-2-oxoethyl)-L-lysyl-[protein] + H2O = glycolate + L-lysyl-[protein] + H(+). The enzyme catalyses S-(1-hydroxy-2-oxoethyl)-L-cysteinyl-[protein] + H2O = glycolate + L-cysteinyl-[protein] + H(+). The catalysed reaction is N(2)-(1-hydroxy-2-oxopropyl)-dGTP + H2O = lactate + dGTP + H(+). It carries out the reaction N(2)-(1-hydroxy-2-oxopropyl)-GTP + H2O = lactate + GTP + H(+). It catalyses the reaction N(2)-(1-hydroxy-2-oxopropyl)-GDP + H2O = lactate + GDP + H(+). The enzyme catalyses N(2)-(1-hydroxy-2-oxopropyl)-GMP + H2O = lactate + GMP + H(+). The catalysed reaction is N(2)-(1-hydroxy-2-oxoethyl)-dGTP + H2O = dGTP + glycolate + H(+). It carries out the reaction N(2)-(1-hydroxy-2-oxoethyl)-GTP + H2O = glycolate + GTP + H(+). It catalyses the reaction N(2)-(1-hydroxy-2-oxoethyl)-GDP + H2O = glycolate + GDP + H(+). The enzyme catalyses N(2)-(1-hydroxy-2-oxoethyl)-GMP + H2O = glycolate + GMP + H(+). The catalysed reaction is an N(2)-(1-hydroxy-2-oxopropyl)-guanosine in RNA + H2O = a guanosine in RNA + lactate + H(+). It carries out the reaction an N(2)-(1-hydroxy-2-oxopropyl)-2'-deoxyguanosine in DNA + H2O = a 2'-deoxyguanosine in DNA + lactate + H(+). It catalyses the reaction an N(2)-(1-hydroxy-2-oxoethyl)-guanosine in RNA + H2O = a guanosine in RNA + glycolate + H(+). The enzyme catalyses an N(2)-(1-hydroxy-2-oxoethyl)-2'-deoxyguanosine in DNA + H2O = a 2'-deoxyguanosine in DNA + glycolate + H(+). Multifunctional protein with controversial molecular function which plays an important role in cell protection against oxidative stress and cell death acting as oxidative stress sensor and redox-sensitive chaperone and protease. It is involved in neuroprotective mechanisms like the stabilization of NFE2L2 and PINK1 proteins, male fertility as a positive regulator of androgen signaling pathway as well as cell growth and transformation through, for instance, the modulation of NF-kappa-B signaling pathway. Has been described as a protein and nucleotide deglycase that catalyzes the deglycation of the Maillard adducts formed between amino groups of proteins or nucleotides and reactive carbonyl groups of glyoxals. But this function is rebuted by other works. As a protein deglycase, repairs methylglyoxal- and glyoxal-glycated proteins, and releases repaired proteins and lactate or glycolate, respectively. Deglycates cysteine, arginine and lysine residues in proteins, and thus reactivates these proteins by reversing glycation by glyoxals. Acts on early glycation intermediates (hemithioacetals and aminocarbinols), preventing the formation of advanced glycation endproducts (AGE) that cause irreversible damage. Also functions as a nucleotide deglycase able to repair glycated guanine in the free nucleotide pool (GTP, GDP, GMP, dGTP) and in DNA and RNA. Is thus involved in a major nucleotide repair system named guanine glycation repair (GG repair), dedicated to reversing methylglyoxal and glyoxal damage via nucleotide sanitization and direct nucleic acid repair. Protects histones from adduction by methylglyoxal, controls the levels of methylglyoxal-derived argininine modifications on chromatin. Able to remove the glycations and restore histone 3, histone glycation disrupts both local and global chromatin architecture by altering histone-DNA interactions as well as histone acetylation and ubiquitination levels. Displays a very low glyoxalase activity that may reflect its deglycase activity. Eliminates hydrogen peroxide and protects cells against hydrogen peroxide-induced cell death. Required for correct mitochondrial morphology and function as well as for autophagy of dysfunctional mitochondria. Plays a role in regulating expression or stability of the mitochondrial uncoupling proteins SLC25A14 and SLC25A27 in dopaminergic neurons of the substantia nigra pars compacta and attenuates the oxidative stress induced by calcium entry into the neurons via L-type channels during pacemaking. Regulates astrocyte inflammatory responses, may modulate lipid rafts-dependent endocytosis in astrocytes and neuronal cells. In pancreatic islets, involved in the maintenance of mitochondrial reactive oxygen species (ROS) levels and glucose homeostasis in an age- and diet dependent manner. Protects pancreatic beta cells from cell death induced by inflammatory and cytotoxic setting. Binds to a number of mRNAs containing multiple copies of GG or CC motifs and partially inhibits their translation but dissociates following oxidative stress. Metal-binding protein able to bind copper as well as toxic mercury ions, enhances the cell protection mechanism against induced metal toxicity. In macrophages, interacts with the NADPH oxidase subunit NCF1 to direct NADPH oxidase-dependent ROS production, and protects against sepsis. This chain is Parkinson disease protein 7 homolog (PARK7), found in Mesocricetus auratus (Golden hamster).